The sequence spans 354 residues: Phospho-N-acetylmuramoyl-pentapeptide-transferase (354 aa).

The next 10 helical transmembrane spans lie at 16-36, 66-86, 88-108, 130-150, 168-188, 193-213, 227-247, 257-277, 282-302, and 331-351; these read YITVRAGIAFFFAFFLTLYLM, TPTMGGVVFIFSALLASLLTV, IHNPYVLGGFLTILGFLAIGV, FFLQILVAFVVSLFLYEYAHL, IFGILFWTLVIVATSNAVNLT, GLATVPSIMALTTLAIITYIT, IIGVGEVSIIAAAFAGSLIGF, VFMGDSGSLTLGAFIGYMAII, VLLILIGFVFVMEALSVIIQV, and KIIVRFWIIALISNLIALITL.

Belongs to the glycosyltransferase 4 family. MraY subfamily. Mg(2+) serves as cofactor.

The protein resides in the cell inner membrane. The enzyme catalyses UDP-N-acetyl-alpha-D-muramoyl-L-alanyl-gamma-D-glutamyl-meso-2,6-diaminopimeloyl-D-alanyl-D-alanine + di-trans,octa-cis-undecaprenyl phosphate = di-trans,octa-cis-undecaprenyl diphospho-N-acetyl-alpha-D-muramoyl-L-alanyl-D-glutamyl-meso-2,6-diaminopimeloyl-D-alanyl-D-alanine + UMP. The protein operates within cell wall biogenesis; peptidoglycan biosynthesis. In terms of biological role, catalyzes the initial step of the lipid cycle reactions in the biosynthesis of the cell wall peptidoglycan: transfers peptidoglycan precursor phospho-MurNAc-pentapeptide from UDP-MurNAc-pentapeptide onto the lipid carrier undecaprenyl phosphate, yielding undecaprenyl-pyrophosphoryl-MurNAc-pentapeptide, known as lipid I. This chain is Phospho-N-acetylmuramoyl-pentapeptide-transferase, found in Nitratiruptor sp. (strain SB155-2).